The following is a 415-amino-acid chain: Beta-1,4-glucuronyltransferase 1 (415 aa).

Residues 1–8 (MQMSYAIR) lie on the Cytoplasmic side of the membrane. Residues 9 to 36 (CAFYQLLLAALMLVAMLQLLYLSLLSGL) form a helical; Signal-anchor for type II membrane protein membrane-spanning segment. Residues 37–415 (HGQEEQDQYF…AKYPNSPRRC (379 aa)) are Lumenal-facing. Asn-204 carries N-linked (GlcNAc...) asparagine glycosylation. Residues Asp-227 and Asp-229 each contribute to the Mn(2+) site. The N-linked (GlcNAc...) asparagine glycan is linked to Asn-300.

This sequence belongs to the glycosyltransferase 49 family. As to quaternary structure, interacts with LARGE1 and LARGE2. The cofactor is Mn(2+).

The protein localises to the golgi apparatus membrane. The enzyme catalyses 3-O-[beta-D-Xyl-(1-&gt;4)-Rib-ol-P-Rib-ol-P-3-beta-D-GalNAc-(1-&gt;3)-beta-D-GlcNAc-(1-&gt;4)-(O-6-P-alpha-D-Man)]-Thr-[protein] + UDP-alpha-D-glucuronate = 3-O-[beta-D-GlcA-(1-&gt;3)-beta-D-Xyl-(1-&gt;4)-Rib-ol-P-Rib-ol-P-3-beta-D-GalNAc-(1-&gt;3)-beta-D-GlcNAc-(1-&gt;4)-(O-6-P-alpha-D-Man)]-Thr-[protein] + UDP + H(+). It participates in protein modification; protein glycosylation. Beta-1,4-glucuronyltransferase involved in O-mannosylation of alpha-dystroglycan (DAG1). Transfers a glucuronic acid (GlcA) residue onto a xylose (Xyl) acceptor to produce the glucuronyl-beta-1,4-xylose-beta disaccharide primer, which is further elongated by LARGE1, during synthesis of phosphorylated O-mannosyl glycan. Phosphorylated O-mannosyl glycan is a carbohydrate structure present in alpha-dystroglycan (DAG1), which is required for binding laminin G-like domain-containing extracellular proteins with high affinity. Required for axon guidance; via its function in O-mannosylation of alpha-dystroglycan (DAG1). The sequence is that of Beta-1,4-glucuronyltransferase 1 from Pongo abelii (Sumatran orangutan).